A 249-amino-acid chain; its full sequence is MERLLIVNADDFGLSKGQNYGIIEACRNGIVTSTTALVNGQAIDHAVQLSRDEPSLAIGMHFVLTMGKPLTAMPGLTRDGVLGKWIWQLAEEDALPLEEITQELVSQYLRFIELFGRKPTHLDSHHHVHMFPQIFPIVARFAAEQGIALRADRQMAFDLPVNLRTTQGFSSAFYGEEISESLFLQVLDDAGHRGDRSLEVMCHPAFIDNTIRQSAYCFPRLTELDVLTSASLKGAIAQRGYRLGSYRDV.

Residues H61 and H125 each coordinate Mg(2+).

The protein belongs to the YdjC deacetylase family. ChbG subfamily. In terms of assembly, homodimer. Mg(2+) is required as a cofactor.

It is found in the cytoplasm. It carries out the reaction N,N'-diacetylchitobiose + H2O = N-acetyl-beta-D-glucosaminyl-(1-&gt;4)-D-glucosamine + acetate. The catalysed reaction is diacetylchitobiose-6'-phosphate + H2O = N'-monoacetylchitobiose-6'-phosphate + acetate. The protein operates within glycan degradation; chitin degradation. Involved in the degradation of chitin. ChbG is essential for growth on the acetylated chitooligosaccharides chitobiose and chitotriose but is dispensable for growth on cellobiose and chitosan dimer, the deacetylated form of chitobiose. Deacetylation of chitobiose-6-P and chitotriose-6-P is necessary for both the activation of the chb promoter by the regulatory protein ChbR and the hydrolysis of phosphorylated beta-glucosides by the phospho-beta-glucosidase ChbF. Catalyzes the removal of only one acetyl group from chitobiose-6-P to yield monoacetylchitobiose-6-P, the inducer of ChbR and the substrate of ChbF. This chain is Chitooligosaccharide deacetylase, found in Escherichia coli (strain K12 / MC4100 / BW2952).